Consider the following 124-residue polypeptide: S-adenosylmethionine decarboxylase proenzyme (124 aa).

The active-site Schiff-base intermediate with substrate; via pyruvic acid is S63. S63 carries the pyruvic acid (Ser); by autocatalysis modification. H68 acts as the Proton acceptor; for processing activity in catalysis. C83 functions as the Proton donor; for catalytic activity in the catalytic mechanism.

This sequence belongs to the prokaryotic AdoMetDC family. Type 1 subfamily. As to quaternary structure, heterotetramer of two alpha and two beta chains arranged as a dimer of alpha/beta heterodimers. The cofactor is pyruvate. In terms of processing, is synthesized initially as an inactive proenzyme. Formation of the active enzyme involves a self-maturation process in which the active site pyruvoyl group is generated from an internal serine residue via an autocatalytic post-translational modification. Two non-identical subunits are generated from the proenzyme in this reaction, and the pyruvate is formed at the N-terminus of the alpha chain, which is derived from the carboxyl end of the proenzyme. The post-translation cleavage follows an unusual pathway, termed non-hydrolytic serinolysis, in which the side chain hydroxyl group of the serine supplies its oxygen atom to form the C-terminus of the beta chain, while the remainder of the serine residue undergoes an oxidative deamination to produce ammonia and the pyruvoyl group blocking the N-terminus of the alpha chain.

The enzyme catalyses S-adenosyl-L-methionine + H(+) = S-adenosyl 3-(methylsulfanyl)propylamine + CO2. Its pathway is amine and polyamine biosynthesis; S-adenosylmethioninamine biosynthesis; S-adenosylmethioninamine from S-adenosyl-L-methionine: step 1/1. Its function is as follows. Catalyzes the decarboxylation of S-adenosylmethionine to S-adenosylmethioninamine (dcAdoMet), the propylamine donor required for the synthesis of the polyamines spermine and spermidine from the diamine putrescine. This Anoxybacillus flavithermus (strain DSM 21510 / WK1) protein is S-adenosylmethionine decarboxylase proenzyme.